Here is a 188-residue protein sequence, read N- to C-terminus: Shikimate kinase (188 aa).

An ATP-binding site is contributed by 21–26 (GAGKTT). Residue threonine 25 participates in Mg(2+) binding. 3 residues coordinate substrate: aspartate 43, arginine 67, and glycine 90. ATP is bound at residue arginine 130. Arginine 148 serves as a coordination point for substrate.

The protein belongs to the shikimate kinase family. Monomer. Mg(2+) is required as a cofactor.

The protein resides in the cytoplasm. The enzyme catalyses shikimate + ATP = 3-phosphoshikimate + ADP + H(+). Its pathway is metabolic intermediate biosynthesis; chorismate biosynthesis; chorismate from D-erythrose 4-phosphate and phosphoenolpyruvate: step 5/7. Functionally, catalyzes the specific phosphorylation of the 3-hydroxyl group of shikimic acid using ATP as a cosubstrate. This chain is Shikimate kinase, found in Geobacillus kaustophilus (strain HTA426).